A 193-amino-acid polypeptide reads, in one-letter code: Thymidine kinase (193 aa).

ATP-binding positions include 14-21 (GCMFSGKT) and 87-90 (DELH). The active-site Proton acceptor is glutamate 88. Residues cysteine 147, cysteine 150, cysteine 185, and cysteine 188 each contribute to the Zn(2+) site.

It belongs to the thymidine kinase family. As to quaternary structure, homotetramer.

It is found in the cytoplasm. The catalysed reaction is thymidine + ATP = dTMP + ADP + H(+). The protein is Thymidine kinase of Roseiflexus sp. (strain RS-1).